Here is a 281-residue protein sequence, read N- to C-terminus: Transcription factor lfc1 (281 aa).

A DNA-binding region (zn(2)-C6 fungal-type) is located at residues 60–87 (CLTCRMKKIKCDETKPTCARCTHGQREC).

The protein localises to the nucleus. In terms of biological role, transcription factor that acts as a negative regulator of basidioma development via repressing the expression of genes involved in basidioma development, including hydrophobins such as Hyd-1 and Hyd-8, lectins such as JRL1, as well as the fruiting body differentiation gene FVFD16. The polypeptide is Transcription factor lfc1 (Flammulina velutipes (Agaricus velutipes)).